Consider the following 227-residue polypeptide: Probable 2-phosphosulfolactate phosphatase (227 aa).

Belongs to the ComB family. Mg(2+) serves as cofactor.

It catalyses the reaction (2R)-O-phospho-3-sulfolactate + H2O = (2R)-3-sulfolactate + phosphate. In Thermotoga petrophila (strain ATCC BAA-488 / DSM 13995 / JCM 10881 / RKU-1), this protein is Probable 2-phosphosulfolactate phosphatase.